We begin with the raw amino-acid sequence, 252 residues long: Ribosomal RNA small subunit methyltransferase J (252 aa).

Residues 101-102 (RD), 117-118 (ER), 153-154 (SS), and D171 contribute to the S-adenosyl-L-methionine site.

The protein belongs to the methyltransferase superfamily. RsmJ family.

The protein localises to the cytoplasm. The enzyme catalyses guanosine(1516) in 16S rRNA + S-adenosyl-L-methionine = N(2)-methylguanosine(1516) in 16S rRNA + S-adenosyl-L-homocysteine + H(+). Its function is as follows. Specifically methylates the guanosine in position 1516 of 16S rRNA. In Salmonella dublin (strain CT_02021853), this protein is Ribosomal RNA small subunit methyltransferase J.